The sequence spans 147 residues: Putative cystatin-9-like protein CST9LP1 (147 aa).

The N-terminal stretch at 1-28 is a signal peptide; sequence MWSLPPSRALSCAPLLLLFSFQFLVTYA. Residues C98 and C108 are joined by a disulfide bond. 2 N-linked (GlcNAc...) asparagine glycosylation sites follow: N117 and N139. C122 and C142 are oxidised to a cystine.

It belongs to the cystatin family.

The protein resides in the secreted. This is Putative cystatin-9-like protein CST9LP1 (CST9LP1) from Homo sapiens (Human).